Reading from the N-terminus, the 325-residue chain is Intelectin-2 (325 aa).

The signal sequence occupies residues 1-26 (MLSMLRTMTRLCFLLFFSVATSGCSA). A Fibrinogen C-terminal domain is found at 44-267 (FSFSSLPRSC…AANALCAGIK (224 aa)). The cysteines at positions 53 and 82 are disulfide-linked. Ca(2+) contacts are provided by histidine 98, glutamate 99, aspartate 101, glycine 104, glycine 109, aspartate 110, and aspartate 145. Disulfide bonds link cysteine 106–cysteine 292, cysteine 211–cysteine 271, and cysteine 263–cysteine 277. The Ca(2+) site is built by asparagine 272, glutamate 274, and aspartate 294. Position 274–275 (274–275 (EH)) interacts with a carbohydrate.

As to expression, expressed only in the small intestine.

Its subcellular location is the secreted. Functionally, may play a role in the defense system against pathogens. The chain is Intelectin-2 (ITLN2) from Homo sapiens (Human).